Here is an 83-residue protein sequence, read N- to C-terminus: Small ribosomal subunit protein bS16 (83 aa).

Belongs to the bacterial ribosomal protein bS16 family.

In Shewanella baltica (strain OS223), this protein is Small ribosomal subunit protein bS16.